Here is a 185-residue protein sequence, read N- to C-terminus: Elongation factor P (185 aa).

It belongs to the elongation factor P family.

The protein localises to the cytoplasm. It participates in protein biosynthesis; polypeptide chain elongation. Involved in peptide bond synthesis. Stimulates efficient translation and peptide-bond synthesis on native or reconstituted 70S ribosomes in vitro. Probably functions indirectly by altering the affinity of the ribosome for aminoacyl-tRNA, thus increasing their reactivity as acceptors for peptidyl transferase. In Nitratidesulfovibrio vulgaris (strain DP4) (Desulfovibrio vulgaris), this protein is Elongation factor P.